We begin with the raw amino-acid sequence, 396 residues long: Ornithine aminotransferase (396 aa).

N6-(pyridoxal phosphate)lysine is present on Lys-255.

The protein belongs to the class-III pyridoxal-phosphate-dependent aminotransferase family. OAT subfamily. The cofactor is pyridoxal 5'-phosphate.

It localises to the cytoplasm. The catalysed reaction is a 2-oxocarboxylate + L-ornithine = L-glutamate 5-semialdehyde + an L-alpha-amino acid. It participates in amino-acid biosynthesis; L-proline biosynthesis; L-glutamate 5-semialdehyde from L-ornithine: step 1/1. Its function is as follows. Catalyzes the interconversion of ornithine to glutamate semialdehyde. The chain is Ornithine aminotransferase from Bacillus cereus (strain 03BB102).